Reading from the N-terminus, the 430-residue chain is Enolase (430 aa).

Gln-163 contributes to the (2R)-2-phosphoglycerate binding site. Glu-205 acts as the Proton donor in catalysis. Residues Asp-242, Glu-288, and Asp-315 each contribute to the Mg(2+) site. (2R)-2-phosphoglycerate-binding residues include Lys-340, Arg-369, Ser-370, and Lys-391. Residue Lys-340 is the Proton acceptor of the active site.

This sequence belongs to the enolase family. Requires Mg(2+) as cofactor.

It localises to the cytoplasm. It is found in the secreted. The protein localises to the cell surface. The catalysed reaction is (2R)-2-phosphoglycerate = phosphoenolpyruvate + H2O. Its pathway is carbohydrate degradation; glycolysis; pyruvate from D-glyceraldehyde 3-phosphate: step 4/5. Functionally, catalyzes the reversible conversion of 2-phosphoglycerate (2-PG) into phosphoenolpyruvate (PEP). It is essential for the degradation of carbohydrates via glycolysis. The polypeptide is Enolase (Onion yellows phytoplasma (strain OY-M)).